The primary structure comprises 336 residues: MKLILPKDYHPTLTVRDTEAAIVYIRETFQDKLASILGVQRMSAPMFVEKASGLNDNLNGVERPVGFDMKAIPDSEIEVVHSLAKWKRLALKRYGFGMHEGLYTNMNAIRRDEDLDNFHSIYVDQWDWEKIIAKEERNTDTLEVTVMKIFKAIKATEKLVTARYPGSTYRLGDHVSFITTQELEDRWPELSPEERENKIAKEEKAVFIMKIGDKLKRSGKPHDGRAPDYDDWQLNGDLIFWYEPLQSKIEVSSMGIRVSEESLREQLKKAHCEDREKLPFHKMLLEGKLPYTIGGGIGQSRLCMLLLGKAHIGEVQASIWPEEMIEKCESDHIHLL.

Belongs to the class-II aminoacyl-tRNA synthetase family. AsnA subfamily.

Its subcellular location is the cytoplasm. It carries out the reaction L-aspartate + NH4(+) + ATP = L-asparagine + AMP + diphosphate + H(+). It functions in the pathway amino-acid biosynthesis; L-asparagine biosynthesis; L-asparagine from L-aspartate (ammonia route): step 1/1. The protein is Aspartate--ammonia ligase of Lactobacillus acidophilus (strain ATCC 700396 / NCK56 / N2 / NCFM).